Consider the following 526-residue polypeptide: MTSDSTIHELIQSYITKWYVIVPLAIIIYKVFDYFYVLSLRKRLGAAVPTNEETDGYFGFHLPFVLMSKKKDGTIIDFSIERYPELKHPETPTFEFPIFTVKLISTIDPENIKAILATQFSDFSLGTRHAHFAPLIGDGIFTLDGAGWKHSRAMLRPQFAREQVGHVKLLEPHVQVLFKHIRKNKGREFDLQELFFRFTVDSATEFLFGESVESLRDASIGMTSKSKDVDGIEDFTGAFNYSQNYLASRSIMQQFYWILNGKKFRECNAIVHKFADHYVQKALNLTEADLEKQAGYVFLYELVKQTRDPQVLRDQLLNILVAGRDTTAGLLSFVFFELARNPDVVAKLKDEIDTKFGLGEDARIEEITFESLKQCEYLKAVLNECLRLYPSVPQNFRVATKNTTLPRGGGKDGLSPILVRKGQTVMYSVYATHRMESVYGKDATTFRPERWFEPETRKLGWAFVPFNGGPRICLGQQFALTEASYVTVRLLQEFSTLTLDPNLEYPPKKMSHLTMSLFDGTNVQMY.

A helical membrane pass occupies residues 18-38 (WYVIVPLAIIIYKVFDYFYVL). C473 is a binding site for heme.

The protein belongs to the cytochrome P450 family. Heme serves as cofactor.

It localises to the membrane. Together with an NADPH cytochrome P450 the enzyme system catalyzes the terminal hydroxylation as the first step in the assimilation of alkanes and fatty acids. This Candida maltosa (Yeast) protein is Cytochrome P450 52A5 (CYP52A5).